Here is a 1187-residue protein sequence, read N- to C-terminus: MDPSALDMAIQHALAGLYPPFEATAPTVLGQVFRLLDSDFRGDGLSFLLDFLIPAKRLCEQVREAACALYTHCLFLHEGWPLCLRDEVVVHLAPLNPLLLRQGDFYLQVESWEEQSVHMTLKCLSSDLREVDKKPIPESSYSLIFTPEWLEAINNDFEGRPLHNCLVASENGITPVPWTKITSPEFVDDRPPIVKVPSSDGDSCPLEDLHLSRPQEPYQAGDLGGKGSVAQIWDKGKGKLSGDKYPGLIKVEPARSGQLAFRTDSEASQSLEGDYVALLGFPQEYRGASPDSEVVTLSVDIQKSQETRPRTKGAPLLGKTLPLSGPAGAPPLGRWACERPAGSGEKPCSGGSRRKARHKASGHTAVRQPQQPHTSVPEKLPDCTSGLVEDTEEEPAASEMQKPVGMPEAMVRLRPGPRQAFSPLLSSAGPGSPAAETKTEETTLGHGRASKPEDCLNKNASFHGSPAPGLQFSFLKEQRVPHVTPEKALLQHARPRKALCPLYSLQPCEAKAPGKDGTTLPTTSGSGPLSGEPPGFRRDSAGPPGGGLRLEECSRTKPRIETLGVKLLQSGIACLPGGRDKVGRPLLLVSTAEDAWEAPWCTTSEVAELLSYLCSVPRLEDKAKGLLVVIDARKGTQRPGLVSALQGIQALAPASVSKVLLLGEKASIPQLSVLPAQVEVLTSLKALRNHVDPSQLPEALEGPFPYHHSEWVQFFQKLDPFLTDLRQASSLLQASIQEFEKGEPPGGVQEATRCLSKSKELMETVLRDPGLLALQREGGTTLASLQQEASGLNANPDVRSHLTEAAALYNLVDGQLHDLVTASNQLLRRLELRVRLGHLETAIHQVSDWMAGEGSQSLQALAPVHVCAETVEKVHAEFEDFFLQVAAQYRQGLDLSKQAAQLGAAEEGAGEMGLPDLAAFASTQQAFQARLTHFYMAAERQRTDLETLLHLHRFRRKMSRFHMDCQNLLTQLSLGKAVKASPGDQLHLRLHCYLKRLASEFQTEKLLAMKLQVASLSRPGLGQEVWEEAQERHQEIQSLLRKALAYCPCPEVPATQVALIDRSRPVAKGQGLPREVGSKWDRSLQDSLAVDHVFKSQRTPQGEQSRNMWAGLLSPEPGQSGDTEEVRGTPKLPDPTLERLLASLFSWPHLPKQSKASRPTGGSFSSEGTGSQTSLEDSPHTSPPASL.

Disordered regions lie at residues 302–405, 419–451, 511–551, 1095–1134, and 1148–1187; these read QKSQ…KPVG, QAFS…RASK, KAPG…LRLE, KSQR…KLPD, and PHLP…PASL. Low complexity predominate over residues 321-333; it reads LPLSGPAGAPPLG. The segment covering 352-361 has biased composition (basic residues); sequence SRRKARHKAS. Composition is skewed to low complexity over residues 422–435 and 517–534; these read SPLL…SPAA and GTTL…GEPP. Positions 1096–1107 are enriched in polar residues; it reads SQRTPQGEQSRN. Low complexity predominate over residues 1160–1174; sequence TGGSFSSEGTGSQTS.

This is an uncharacterized protein from Mus musculus (Mouse).